The primary structure comprises 473 residues: Spliceosome-associated protein CWC27 homolog (473 aa).

The residue at position 2 (S2) is an N-acetylserine. Positions 11–166 (TNGKVLLKTT…NSHKIRSCEV (156 aa)) constitute a PPIase cyclophilin-type domain. Over residues 178-193 (EIKKPKKEKPEEEVKK) the composition is skewed to basic and acidic residues. Disordered regions lie at residues 178–197 (EIKK…LKPK), 203–383 (SLLS…TSRE), and 401–473 (IAET…KERR). Positions 206–230 (SFGEEAEEEEEEVNRVSQSMKGKSK) form a coiled coil. Positions 231 to 241 (SSHDLLKDDPH) are enriched in basic and acidic residues. Positions 252–254 (RGD) match the Cell attachment site motif. Residues 256–266 (AEDSDDDGEYE) show a composition bias toward acidic residues. 2 stretches are compositionally biased toward basic and acidic residues: residues 267-348 (GAEH…KRSE) and 360-372 (EYRR…EALR). Positions 311–378 (VSRSEELRKE…EALRKQQAKT (68 aa)) form a coiled coil. At S347 the chain carries Phosphoserine. Over residues 405–419 (PENDISETEVEDDEG) the composition is skewed to acidic residues. Composition is skewed to basic and acidic residues over residues 426-438 (QFED…KDAS) and 458-473 (RREE…KERR).

This sequence belongs to the cyclophilin-type PPIase family. As to quaternary structure, part of the activated spliceosome B/catalytic step 1 spliceosome, one of the forms of the spliceosome which has a well-formed active site but still cannot catalyze the branching reaction and is composed at least of 52 proteins, the U2, U5 and U6 snRNAs and the pre-mRNA. Recruited during early steps of activated spliceosome B maturation, it is probably one of the first proteins released from this complex as he matures to the spliceosome C complex. Component of the minor spliceosome, which splices U12-type introns.

It is found in the nucleus. In terms of biological role, as part of the spliceosome, plays a role in pre-mRNA splicing. Probable inactive PPIase with no peptidyl-prolyl cis-trans isomerase activity. As a component of the minor spliceosome, involved in the splicing of U12-type introns in pre-mRNAs. This is Spliceosome-associated protein CWC27 homolog from Bos taurus (Bovine).